Consider the following 273-residue polypeptide: Putative phosphoenolpyruvate synthase regulatory protein (273 aa).

Residue 153-160 participates in ADP binding; sequence AVSRAGKT.

Belongs to the pyruvate, phosphate/water dikinase regulatory protein family. PSRP subfamily.

The catalysed reaction is [pyruvate, water dikinase] + ADP = [pyruvate, water dikinase]-phosphate + AMP + H(+). It carries out the reaction [pyruvate, water dikinase]-phosphate + phosphate + H(+) = [pyruvate, water dikinase] + diphosphate. Its function is as follows. Bifunctional serine/threonine kinase and phosphorylase involved in the regulation of the phosphoenolpyruvate synthase (PEPS) by catalyzing its phosphorylation/dephosphorylation. The polypeptide is Putative phosphoenolpyruvate synthase regulatory protein (Stenotrophomonas maltophilia (strain R551-3)).